We begin with the raw amino-acid sequence, 245 residues long: 2,3-bisphosphoglycerate-dependent phosphoglycerate mutase (245 aa).

Substrate-binding positions include 8–15 (RHGQSLWN), 21–22 (TG), Arg60, 87–90 (ERHY), Lys98, 114–115 (RR), and 183–184 (GN). Residue His9 is the Tele-phosphohistidine intermediate of the active site. The active-site Proton donor/acceptor is Glu87.

The protein belongs to the phosphoglycerate mutase family. BPG-dependent PGAM subfamily.

It carries out the reaction (2R)-2-phosphoglycerate = (2R)-3-phosphoglycerate. Its pathway is carbohydrate degradation; glycolysis; pyruvate from D-glyceraldehyde 3-phosphate: step 3/5. Catalyzes the interconversion of 2-phosphoglycerate and 3-phosphoglycerate. The chain is 2,3-bisphosphoglycerate-dependent phosphoglycerate mutase from Bacillus cereus (strain ATCC 14579 / DSM 31 / CCUG 7414 / JCM 2152 / NBRC 15305 / NCIMB 9373 / NCTC 2599 / NRRL B-3711).